The following is a 111-amino-acid chain: Holo-[acyl-carrier-protein] synthase (111 aa).

Residues D8 and E57 each coordinate Mg(2+).

The protein belongs to the P-Pant transferase superfamily. AcpS family. Mg(2+) serves as cofactor.

The protein resides in the cytoplasm. The enzyme catalyses apo-[ACP] + CoA = holo-[ACP] + adenosine 3',5'-bisphosphate + H(+). Transfers the 4'-phosphopantetheine moiety from coenzyme A to a Ser of acyl-carrier-protein. The polypeptide is Holo-[acyl-carrier-protein] synthase (Mycoplasmoides gallisepticum (strain R(low / passage 15 / clone 2)) (Mycoplasma gallisepticum)).